The chain runs to 174 residues: MIRALYIGRFQPYHNGHHYVINQIAQEADELIIGIGSAQMSHEPADPFTAGERVLMITGALQDLHKPLYVIPLEDINRNVLWVSHVRAMTPPFHRIYSGNPLVIRLFHEAGIEVLSPAMYERATLSGTKIRDLIACDKPWEDFVPPAVVRVIQEIDGISRIRALNQDDGDCPGR.

This sequence belongs to the archaeal NMN adenylyltransferase family.

Its subcellular location is the cytoplasm. It carries out the reaction beta-nicotinamide D-ribonucleotide + ATP + H(+) = diphosphate + NAD(+). It participates in cofactor biosynthesis; NAD(+) biosynthesis; NAD(+) from nicotinamide D-ribonucleotide: step 1/1. This is Nicotinamide-nucleotide adenylyltransferase from Methanospirillum hungatei JF-1 (strain ATCC 27890 / DSM 864 / NBRC 100397 / JF-1).